The chain runs to 449 residues: Metacaspase-1 (449 aa).

Residues methionine 1–serine 132 are disordered. Residues tyrosine 10 to proline 26 show a composition bias toward low complexity. A compositionally biased stretch (pro residues) spans proline 27–glutamine 55. A compositionally biased stretch (polar residues) spans asparagine 56 to threonine 66. 2 stretches are compositionally biased toward low complexity: residues glutamine 67 to proline 91 and glutamine 98 to proline 112. Polar residues predominate over residues glycine 119–serine 132. Catalysis depends on residues histidine 232 and cysteine 293.

This sequence belongs to the peptidase C14B family.

In terms of biological role, involved in cell death (apoptosis). This is Metacaspase-1 (MCA1) from Lodderomyces elongisporus (strain ATCC 11503 / CBS 2605 / JCM 1781 / NBRC 1676 / NRRL YB-4239) (Yeast).